The following is a 600-amino-acid chain: Alpha pinene synthase, chloroplastic (600 aa).

The disordered stretch occupies residues 1 to 26 (MSSISMHARPLNISAANNHHPSWDRR). The transit peptide at 1-31 (MSSISMHARPLNISAANNHHPSWDRRVSKPR) directs the protein to the chloroplast. Positions 354, 358, 498, and 506 each coordinate Mg(2+). The DDXXD motif motif lies at 354–358 (DDVYD).

Belongs to the terpene synthase family. Tpsa subfamily. Mg(2+) serves as cofactor. The cofactor is Mn(2+). In terms of tissue distribution, barely detectable in leaves.

It is found in the plastid. Its subcellular location is the chloroplast. The enzyme catalyses (2E)-geranyl diphosphate = alpha-pinene + diphosphate. The protein operates within secondary metabolite biosynthesis; terpenoid biosynthesis. In terms of biological role, monoterpene synthase involved in the biosynthesis of volatile compounds widely used in aromatherapy and folk medicine, and present in culinary herbs. Mediates the conversion of (2E)-geranyl diphosphate (GPP) into alpha-pinene and, as minor compounds, into alpha-phellandrene, limonene and alpha-terpinolene. The sequence is that of Alpha pinene synthase, chloroplastic from Lavandula stoechas (Butterfly lavender).